Reading from the N-terminus, the 229-residue chain is DNA repair protein RecO (229 aa).

The protein belongs to the RecO family.

Functionally, involved in DNA repair and RecF pathway recombination. The chain is DNA repair protein RecO from Legionella pneumophila (strain Lens).